The chain runs to 409 residues: MNAEIIAVGTEILLGDIVNTNAQFLSKKLAEMGISVYHQSVVGDNGNRLKEELTESFKRSNIVITTGGLGPTKDDLTKEIGAEYFNRKMFLHEESLKNIKNYFKKQGKILNENNEKQAYFPEKSTILPNNFGTAPGCIMEENDKFLIMLPGPPKEIIPMFKDYVIPYLKKFNEGVLISKVLRICGMGESKVVTEINHLIENQTNPTVAPYAKDNEVTLRLTAKAKNEKEALSLIYPLEKEIRDILGNNIYGTDSDTLEGVIGKFLIENNLYIATAESCTGGLLCGRLVNYPGISKCLVEGIVSYSNNSKMNRIGVKKETLNKFGAVSEETAIEMAKGVANSSGADIGISTTGIAGPSGGTYEKPVGLVYIGYYIKGKSFAKKFIFPGDRQSMRNKTVTVALDYLRKNLI.

The protein belongs to the CinA family.

The protein is Putative competence-damage inducible protein of Clostridium tetani (strain Massachusetts / E88).